The chain runs to 308 residues: CAAX prenyl protease 2 (308 aa).

Alanine 2 bears the N-acetylalanine mark. 3 helical membrane-spanning segments follow: residues alanine 25–leucine 45, valine 75–isoleucine 95, and isoleucine 112–methionine 132. The active-site Proton donor/acceptor is glutamate 175. The helical transmembrane segment at methionine 186–valine 206 threads the bilayer. The Proton donor/acceptor role is filled by histidine 208. 2 consecutive transmembrane segments (helical) span residues leucine 233 to alanine 253 and proline 262 to threonine 282.

It belongs to the peptidase U48 family. Ubiquitinated. Undergoes 'Lys-48'- and 'Lys-63'-linked ubiquitination. 'Lys-48' ubiquitination induces its degradation. Deubiquitinated by USP17L2/USP17 that cleaves 'Lys-63'-linked ubiquitin chains.

The protein resides in the endoplasmic reticulum membrane. It catalyses the reaction Hydrolyzes the peptide bond -P2-(S-farnesyl or geranylgeranyl)C-P1'-P2'-P3'-COOH where P1' and P2' are amino acids with aliphatic sidechains and P3' is any C-terminal residue.. Its activity is regulated as follows. Deubiquitination by USP17L2/USP17 negatively regulates the proteolytic activity toward Ras GTPases. Its function is as follows. Protease involved in the processing of a variety of prenylated proteins containing the C-terminal CAAX motif, where C is a cysteine modified with an isoprenoid lipid, A is an aliphatic amino acid and X is any C-terminal amino acid. Proteolytically removes the C-terminal three residues of farnesylated and geranylated proteins, leaving the prenylated cysteine as the new C-terminus. Is able to process K-Ras, N-Ras, H-Ras, RAP1B and G-gamma-1. This is CAAX prenyl protease 2 (Rce1) from Rattus norvegicus (Rat).